The primary structure comprises 150 residues: D-aminoacyl-tRNA deacylase (150 aa).

The Gly-cisPro motif, important for rejection of L-amino acids motif lies at 138 to 139 (GP).

The protein belongs to the DTD family. In terms of assembly, homodimer.

Its subcellular location is the cytoplasm. It catalyses the reaction glycyl-tRNA(Ala) + H2O = tRNA(Ala) + glycine + H(+). It carries out the reaction a D-aminoacyl-tRNA + H2O = a tRNA + a D-alpha-amino acid + H(+). In terms of biological role, an aminoacyl-tRNA editing enzyme that deacylates mischarged D-aminoacyl-tRNAs. Also deacylates mischarged glycyl-tRNA(Ala), protecting cells against glycine mischarging by AlaRS. Acts via tRNA-based rather than protein-based catalysis; rejects L-amino acids rather than detecting D-amino acids in the active site. By recycling D-aminoacyl-tRNA to D-amino acids and free tRNA molecules, this enzyme counteracts the toxicity associated with the formation of D-aminoacyl-tRNA entities in vivo and helps enforce protein L-homochirality. The polypeptide is D-aminoacyl-tRNA deacylase (Thermosipho melanesiensis (strain DSM 12029 / CIP 104789 / BI429)).